Reading from the N-terminus, the 568-residue chain is AP2-like ethylene-responsive transcription factor PLT2 (568 aa).

A compositionally biased stretch (low complexity) spans 151–171 (ASPAETSADNSSSTTNTSGGA). Positions 151-173 (ASPAETSADNSSSTTNTSGGAIV) are disordered. 2 consecutive DNA-binding regions (AP2/ERF) follow at residues 190-256 (IYRG…TNFP) and 292-350 (MYRG…TNFE). Residues 548–568 (WNSGESAQGSNPGGVFTMWNE) form a disordered region.

It belongs to the AP2/ERF transcription factor family. AP2 subfamily. Stabilized in root meristems by reactive oxygen species (ROS) mediated oxidative post-translational modification triggered by RGF1 hormone peptide in a RITF1-dependent manner. In terms of tissue distribution, expressed in roots, seedlings, flowers, and siliques. Also detected at low levels in leaves. In roots, specifically detected in the distal root meristem, including the QC. This tissue specificity is regulated by auxin gradient and depends on PIN proteins.

Its subcellular location is the nucleus. Its function is as follows. Probably acts as a transcriptional activator. Binds to the GCC-box pathogenesis-related promoter element. May be involved in the regulation of gene expression by stress factors and by components of stress signal transduction pathways. Master regulator of basal/root fate. Essential for root quiescent center (QC) and columella specification, stem cell activity, as well as for establishment of the stem cell niche during embryogenesis. Modulates the root polar auxin transport by regulating the distribution of PIN genes. Essential role in respecifying pattern and polarity in damaged roots. Direct target of the transcriptional corepressor TPL. Expression levels and patterns regulated post-transcriptionally by root meristem growth factors (RGFs). In Arabidopsis thaliana (Mouse-ear cress), this protein is AP2-like ethylene-responsive transcription factor PLT2.